The sequence spans 1142 residues: Enamelin (1142 aa).

Positions 1 to 38 are cleaved as a signal peptide; the sequence is MLLSCRHGASSPKLDNLVPSGKMKILLVFLGLLCYSAA. S53 is subject to Phosphoserine. Disordered regions lie at residues 90-347, 374-513, 543-587, and 603-662; these read YQMP…FYRN, YRRV…IIPK, TEGI…LSHG, and RENS…FPGQ. Pro residues predominate over residues 128-148; the sequence is QPQPKTPTPKQPLNEPSPTPT. S191 and S216 each carry phosphoserine. Basic and acidic residues predominate over residues 223 to 234; the sequence is DFEKPKEKDPPK. Composition is skewed to polar residues over residues 243 to 303 and 381 to 395; these read SVNT…SQSP and TARS…NSAN. N-linked (GlcNAc...) asparagine glycosylation is found at N245, N252, N264, and N291. The propeptide occupies 277–514; it reads NPRSNPTGQN…QTQTQIIPKG (238 aa). The span at 431–442 shows a compositional bias: basic and acidic residues; the sequence is PREKQVSQKERT. Polar residues predominate over residues 453-467; the sequence is WRNSQDYGINKSNYK. N462 carries an N-linked (GlcNAc...) asparagine glycan. P547 bears the Hydroxyproline mark. Residues 570–582 show a composition bias toward basic and acidic residues; the sequence is FKEDPGRQEEHLP. A propeptide spanning residues 666 to 669 is cleaved from the precursor; it reads DMEE. Polar residues predominate over residues 787–816; that stretch reads NLYKTPTSSPHQKENQPYSNNSPAGLQKNP. Disordered regions lie at residues 787–820, 921–965, and 1020–1049; these read NLYK…TWHE, TSIV…SQLS, and VFGT…QQRQ. Residue N929 is glycosylated (N-linked (GlcNAc...) asparagine). The segment covering 952–965 has biased composition (polar residues); the sequence is LRRSTPCSVKSQLS. An N-linked (GlcNAc...) asparagine glycan is attached at N1040.

Proteolytically cleaved into several smaller polypeptides. Cleavage of N-terminal region of enamelin occurs soon after secretion. In terms of processing, phosphorylated by FAM20C in vitro. As to expression, expressed by secretory-phase ameloblasts. Intact enamelin and large-molecular-weight enamelins are limited to the most superficial layer of the developing enamel matrix, while low-molecular-weight enamelins are observed in deeper enamelin. Preferential localization among the crystallites in rod and interrod enamel.

The protein localises to the secreted. The protein resides in the extracellular space. Its subcellular location is the extracellular matrix. Its function is as follows. Involved in the mineralization and structural organization of enamel. Involved in the extension of enamel during the secretory stage of dental enamel formation. This Sus scrofa (Pig) protein is Enamelin (ENAM).